The following is a 363-amino-acid chain: GDSL esterase/lipase At3g14220 (363 aa).

The first 28 residues, 1-28, serve as a signal peptide directing secretion; it reads MAKNRNLVFFLGVLASFTLSSFPVTVSG. Catalysis depends on Ser-39, which acts as the Nucleophile. Residues Asp-318 and His-321 contribute to the active site.

It belongs to the 'GDSL' lipolytic enzyme family.

It is found in the secreted. This Arabidopsis thaliana (Mouse-ear cress) protein is GDSL esterase/lipase At3g14220.